Consider the following 344-residue polypeptide: Serpentine receptor class delta-3 (344 aa).

Transmembrane regions (helical) follow at residues 21 to 41 (IIGY…IILI), 54 to 74 (MLHL…MLAL), 102 to 122 (FLHV…MISF), 142 to 162 (ICIL…SDVA), 203 to 223 (FSAI…IVFF), 259 to 279 (IVPI…FQVV), and 287 to 307 (MPFR…LYFV).

Belongs to the nematode receptor-like protein srd family.

The protein localises to the membrane. The polypeptide is Serpentine receptor class delta-3 (srd-3) (Caenorhabditis elegans).